We begin with the raw amino-acid sequence, 356 residues long: Tetraacyldisaccharide 4'-kinase (356 aa).

Residue 67–74 coordinates ATP; the sequence is FVGGTGKT.

This sequence belongs to the LpxK family.

It catalyses the reaction a lipid A disaccharide + ATP = a lipid IVA + ADP + H(+). The protein operates within glycolipid biosynthesis; lipid IV(A) biosynthesis; lipid IV(A) from (3R)-3-hydroxytetradecanoyl-[acyl-carrier-protein] and UDP-N-acetyl-alpha-D-glucosamine: step 6/6. In terms of biological role, transfers the gamma-phosphate of ATP to the 4'-position of a tetraacyldisaccharide 1-phosphate intermediate (termed DS-1-P) to form tetraacyldisaccharide 1,4'-bis-phosphate (lipid IVA). In Herminiimonas arsenicoxydans, this protein is Tetraacyldisaccharide 4'-kinase.